The sequence spans 331 residues: Beta-ketoacyl-[acyl-carrier-protein] synthase III (331 aa).

Catalysis depends on residues cysteine 115 and histidine 255. The ACP-binding stretch occupies residues 256 to 260; that stretch reads QANFR. Asparagine 285 is an active-site residue.

It belongs to the thiolase-like superfamily. FabH family. As to quaternary structure, homodimer.

The protein localises to the cytoplasm. The catalysed reaction is malonyl-[ACP] + acetyl-CoA + H(+) = 3-oxobutanoyl-[ACP] + CO2 + CoA. It participates in lipid metabolism; fatty acid biosynthesis. In terms of biological role, catalyzes the condensation reaction of fatty acid synthesis by the addition to an acyl acceptor of two carbons from malonyl-ACP. Catalyzes the first condensation reaction which initiates fatty acid synthesis and may therefore play a role in governing the total rate of fatty acid production. Possesses both acetoacetyl-ACP synthase and acetyl transacylase activities. Its substrate specificity determines the biosynthesis of branched-chain and/or straight-chain of fatty acids. The chain is Beta-ketoacyl-[acyl-carrier-protein] synthase III from Helicobacter pylori (strain ATCC 700392 / 26695) (Campylobacter pylori).